Consider the following 143-residue polypeptide: Large ribosomal subunit protein mL51 (143 aa).

The transit peptide at 1–52 (MAALVRGLMRRVAALPQAVRSVSGGGQRHEPYRPLPITSPLAGLPRNFRVRE) directs the protein to the mitochondrion.

This sequence belongs to the mitochondrion-specific ribosomal protein mL51 family. Component of the mitochondrial ribosome large subunit (39S) which comprises a 16S rRNA and about 50 distinct proteins.

It is found in the mitochondrion. The sequence is that of Large ribosomal subunit protein mL51 (MRPL51) from Gallus gallus (Chicken).